We begin with the raw amino-acid sequence, 191 residues long: Thymidine kinase (191 aa).

ATP contacts are provided by residues 15-22 (GPMYSGKT) and 88-91 (DEAQ). The active-site Proton acceptor is the E89. The Zn(2+) site is built by C145, C148, C183, and C186.

Belongs to the thymidine kinase family. Homotetramer.

The protein localises to the cytoplasm. The catalysed reaction is thymidine + ATP = dTMP + ADP + H(+). The polypeptide is Thymidine kinase (Clostridium botulinum (strain Hall / ATCC 3502 / NCTC 13319 / Type A)).